We begin with the raw amino-acid sequence, 227 residues long: 2,3-bisphosphoglycerate-dependent phosphoglycerate mutase (227 aa).

Substrate is bound by residues 7 to 14 (RHGFSEWN), 20 to 21 (TG), R59, 86 to 89 (ERHY), K97, 113 to 114 (RR), and 182 to 183 (GN). H8 acts as the Tele-phosphohistidine intermediate in catalysis. E86 acts as the Proton donor/acceptor in catalysis.

The protein belongs to the phosphoglycerate mutase family. BPG-dependent PGAM subfamily. In terms of assembly, homodimer.

The enzyme catalyses (2R)-2-phosphoglycerate = (2R)-3-phosphoglycerate. The protein operates within carbohydrate degradation; glycolysis; pyruvate from D-glyceraldehyde 3-phosphate: step 3/5. Catalyzes the interconversion of 2-phosphoglycerate and 3-phosphoglycerate. The polypeptide is 2,3-bisphosphoglycerate-dependent phosphoglycerate mutase (Histophilus somni (strain 129Pt) (Haemophilus somnus)).